Consider the following 84-residue polypeptide: GTP cyclohydrolase 1 feedback regulatory protein (84 aa).

Belongs to the GFRP family. As to quaternary structure, homopentamer. Forms a complex with GCH1 where a GCH1 homodecamer is sandwiched by two GFRP homopentamers.

It is found in the nucleus. The protein resides in the nucleus membrane. The protein localises to the cytoplasm. Its subcellular location is the cytosol. In terms of biological role, mediates tetrahydrobiopterin inhibition of GTP cyclohydrolase 1. This chain is GTP cyclohydrolase 1 feedback regulatory protein (gchfr), found in Xenopus laevis (African clawed frog).